The primary structure comprises 183 residues: Adenine phosphoribosyltransferase (183 aa).

This sequence belongs to the purine/pyrimidine phosphoribosyltransferase family. Homodimer.

The protein resides in the cytoplasm. The catalysed reaction is AMP + diphosphate = 5-phospho-alpha-D-ribose 1-diphosphate + adenine. It functions in the pathway purine metabolism; AMP biosynthesis via salvage pathway; AMP from adenine: step 1/1. Catalyzes a salvage reaction resulting in the formation of AMP, that is energically less costly than de novo synthesis. In Sodalis glossinidius (strain morsitans), this protein is Adenine phosphoribosyltransferase.